A 541-amino-acid chain; its full sequence is 2-hydroxyacylsphingosine 1-beta-galactosyltransferase (541 aa).

An N-terminal signal peptide occupies residues 1–20 (MKSYTPYFILLWSAVGIAKA). Residues Asn78, Asn333, and Asn442 are each glycosylated (N-linked (GlcNAc...) asparagine). The helical transmembrane segment at 472-492 (YFLLDIAFVLLLGAALLYFLL) threads the bilayer.

The protein belongs to the UDP-glycosyltransferase family.

Its subcellular location is the membrane. It localises to the endoplasmic reticulum. It carries out the reaction an N-acylsphing-4-enine + UDP-alpha-D-galactose = a beta-D-galactosyl-(1&lt;-&gt;1')-N-acylsphing-4-enine + UDP + H(+). The catalysed reaction is an N-acyl-sphingoid base + UDP-alpha-D-galactose = a D-galactosylceramide + UDP + H(+). The enzyme catalyses N-(2-hydroxy-hexanoyl)-sphing-4-enine + UDP-alpha-D-galactose = N-(2-hydroxy-hexanoyl)-beta-D-galactosyl-sphing-4-enine + UDP + H(+). It catalyses the reaction N-(2-hydroxy-hexanoyl)-sphinganine + UDP-alpha-D-galactose = N-(2-hydroxyhexanoyl)-beta-D-galactosylsphinganine + UDP + H(+). It participates in sphingolipid metabolism; galactosylceramide biosynthesis. Its function is as follows. Catalyzes the transfer of galactose to ceramide, a key enzymatic step in the biosynthesis of galactocerebrosides, which are abundant sphingolipids of the myelin membrane of the central nervous system and peripheral nervous system. Galactosylates both hydroxy- and non-hydroxy fatty acid-containing ceramides and diglycerides. This chain is 2-hydroxyacylsphingosine 1-beta-galactosyltransferase, found in Homo sapiens (Human).